Reading from the N-terminus, the 842-residue chain is DNA topoisomerase-like protein cin-4 (842 aa).

A compositionally biased stretch (basic and acidic residues) spans 1–26 (MSEEDRNVFTSIDKKGGGSKQMDDLN). The tract at residues 1–50 (MSEEDRNVFTSIDKKGGGSKQMDDLNQKCPKRKTSKLKGIPKLEDANDAG) is disordered. Positions 314-783 (IPCLVDGLKP…TWQDLWITDL (470 aa)) constitute a Topo IIA-type catalytic domain.

Belongs to the type II topoisomerase family.

Functionally, plays a role in the removal of cohesin from kinetochores on mitotic chromosomes and is required for centromere resolution. This Caenorhabditis elegans protein is DNA topoisomerase-like protein cin-4.